Consider the following 92-residue polypeptide: Small ribosomal subunit protein uS19c (92 aa).

The protein belongs to the universal ribosomal protein uS19 family.

Its subcellular location is the plastid. The protein localises to the chloroplast. Its function is as follows. Protein S19 forms a complex with S13 that binds strongly to the 16S ribosomal RNA. This Lactuca sativa (Garden lettuce) protein is Small ribosomal subunit protein uS19c.